The primary structure comprises 175 residues: Translation initiation factor IF-3 (175 aa).

The protein belongs to the IF-3 family. As to quaternary structure, monomer.

It localises to the cytoplasm. Functionally, IF-3 binds to the 30S ribosomal subunit and shifts the equilibrium between 70S ribosomes and their 50S and 30S subunits in favor of the free subunits, thus enhancing the availability of 30S subunits on which protein synthesis initiation begins. This chain is Translation initiation factor IF-3, found in Chlamydia trachomatis serovar D (strain ATCC VR-885 / DSM 19411 / UW-3/Cx).